A 3503-amino-acid chain; its full sequence is Protein dachsous (3503 aa).

The signal sequence occupies residues 1–20; the sequence is MLRSSLLILLAIVLLGSSQA. Residues 21-3045 are Extracellular-facing; sequence ASHDQERERK…SSSGSIGDWA (3025 aa). Cadherin domains are found at residues 22–121, 122–233, 234–340, 345–451, 452–558, 559–662, 663–774, 775–878, 879–983, 984–1100, 1101–1203, 1205–1312, 1313–1432, and 1433–1549; these read SHDQ…APTF, PQTS…QPIF, NQSR…QPTI, LSDD…PPEF, EQDL…EPIF, DQSF…RPVF, YPRE…PPIF, EKAR…APEF, EASM…PPVF, EKDE…DPKF, QKSK…APEI, DPQE…RPTF, TSSS…APEW, and PQDP…APHF. N-linked (GlcNAc...) asparagine glycans are attached at residues asparagine 220 and asparagine 234. The residue at position 236 (serine 236) is a Phosphoserine. Residues asparagine 245, asparagine 381, and asparagine 416 are each glycosylated (N-linked (GlcNAc...) asparagine). Asparagine 564, asparagine 594, and asparagine 743 each carry an N-linked (GlcNAc...) asparagine glycan. N-linked (GlcNAc...) asparagine glycans are attached at residues asparagine 966, asparagine 991, asparagine 1006, asparagine 1029, asparagine 1143, and asparagine 1236. 4 N-linked (GlcNAc...) asparagine glycosylation sites follow: asparagine 1453, asparagine 1479, asparagine 1524, and asparagine 1553. Cadherin domains follow at residues 1556–1666, 1667–1794, 1796–1899, 1900–2004, 2005–2111, 2114–2269, 2270–2375, 2375–2479, 2489–2595, 2596–2699, 2701–2809, 2810–2916, and 2919–3028; these read GGKT…PPRF, LQAV…SPEF, PGSC…APRF, KLSK…RPIF, ERYP…TPVL, QNET…SPKF, SQKQ…QPTF, FPPN…APVF, AILP…RSQF, LQNQ…FPIF, RSAK…EPKF, PLTE…TPQF, and RTYR…HPGT. N-linked (GlcNAc...) asparagine glycosylation is found at asparagine 1700, asparagine 1884, and asparagine 1940. The N-linked (GlcNAc...) asparagine glycan is linked to asparagine 2115. The tract at residues 2193 to 2225 is disordered; sequence GRALHYEEEIDESSEEDPNNSTRSQRALTSSSF. Residues 2200–2210 are compositionally biased toward acidic residues; the sequence is EEIDESSEEDP. N-linked (GlcNAc...) asparagine glycans are attached at residues asparagine 2211 and asparagine 2212. A compositionally biased stretch (polar residues) spans 2211–2225; the sequence is NNSTRSQRALTSSSF. N-linked (GlcNAc...) asparagine glycans are attached at residues asparagine 2421, asparagine 2511, asparagine 2520, asparagine 2547, asparagine 2588, and asparagine 2678. Residues asparagine 2845 and asparagine 2967 are each glycosylated (N-linked (GlcNAc...) asparagine). Residues 3046–3066 traverse the membrane as a helical segment; the sequence is IGLLVAFLLVLCAAAGIFLFI. Over 3067-3503 the chain is Cytoplasmic; the sequence is HMRSRKPRNA…SQRGNVGTRM (437 aa). 3 disordered regions span residues 3114–3195, 3360–3404, and 3431–3503; these read AGAA…GRIS, LSEH…IPPP, and LPRS…GTRM. Composition is skewed to low complexity over residues 3133 to 3159 and 3363 to 3372; these read GAHA…SGRG and HSGSGASSSA. A compositionally biased stretch (pro residues) spans 3391–3404; it reads KPPPSAPPTHIPPP. Low complexity predominate over residues 3440 to 3463; that stretch reads ASGSFSTSSAMSPSFSPSLSPLAT. Residues serine 3465 and serine 3469 each carry the phosphoserine modification. Positions 3492–3503 are enriched in polar residues; it reads QPSQRGNVGTRM.

As to quaternary structure, interacts (via cytoplasmic region) with Myo31DF. Post-translationally, phosphorylated by fj on Ser/Thr of cadherin domains. Expressed in embryonic ectoderm. In larvae, expression is restricted to imaginal disks and brain.

The protein localises to the cell membrane. Its subcellular location is the cell junction. Required for normal morphogenesis of adult structures derived from imaginal disks. Plays a role in planar cell polarity and in determining body left-right asymmetry. Expression in segment H1 of the imaginal ring and interaction with Myo31DF are required to induce changes of cell shape and orientation in segment H2, which then gives rise to normal, dextral looping of the adult hindgut. This is Protein dachsous (ds) from Drosophila melanogaster (Fruit fly).